Here is a 517-residue protein sequence, read N- to C-terminus: Retrotransposon-like protein 1 (517 aa).

Disordered stretches follow at residues 1-29 and 142-161; these read MEVNEGQDTEGGSSRAQTLTPPPNPQQQL and EEERDKRKKEEQFREADARS.

The polypeptide is Retrotransposon-like protein 1 (retr-1) (Caenorhabditis elegans).